We begin with the raw amino-acid sequence, 283 residues long: Plasma membrane ascorbate-dependent reductase CYBRD1 (283 aa).

Residues 1 to 5 are Cytoplasmic-facing; that stretch reads MEGYK. A helical membrane pass occupies residues 6–30; it reads SFLAFLVSSLLLGFLGVIFTLVWVL. The Cytochrome b561 domain occupies 13–218; sequence SSLLLGFLGV…FGGLVVWMVT (206 aa). The Extracellular segment spans residues 31–45; it reads HWREGLGWDGGAAEF. The chain crosses the membrane as a helical span at residues 46-67; it reads NWHPVLVTSGFIFIQGIAIIVY. 3 residues coordinate heme b: His48, Arg68, and Lys77. The Cytoplasmic segment spans residues 68-76; sequence RLPWTWKCS. 2 residues coordinate L-ascorbate: Lys77 and Lys81. A helical membrane pass occupies residues 77 to 103; the sequence is KLLMKFIHAGLHLTALIFTIVALVAVF. A heme b-binding site is contributed by His84. The Extracellular segment spans residues 104–116; sequence DFHNAKNIPNMYS. Residue His106 participates in Fe(3+) binding. Residues 113 to 116 and His118 contribute to the heme b site; that span reads NMYS. The chain crosses the membrane as a helical span at residues 117–142; sequence LHSWIGLTVVILYALQLVLGVSIYLL. The Cytoplasmic portion of the chain corresponds to 143 to 149; sequence PFASNTL. Residue Arg150 coordinates L-ascorbate. A helical membrane pass occupies residues 150–177; the sequence is RAALMPVHVYSGLFIFGTVIATALMGIT. Heme b-binding residues include His157 and Glu178. At 178–195 the chain is on the extracellular side; the sequence is EKLIFSLKEPPYSKLPPE. The helical transmembrane segment at 196 to 220 threads the bilayer; sequence AIFVNTFGLLILVFGGLVVWMVTTP. Residues 221–283 lie on the Cytoplasmic side of the membrane; that stretch reads AWKRPREQGM…LDEAGQRSTM (63 aa). Lys223 contacts heme b. A disordered region spans residues 234–262; it reads SPTVSSPDETEEGSTITDCSNTEKSDVEL. The span at 235-253 shows a compositional bias: polar residues; the sequence is PTVSSPDETEEGSTITDCS.

In terms of assembly, homodimer. Requires heme b as cofactor.

The protein resides in the cell membrane. It localises to the apical cell membrane. It catalyses the reaction Fe(3+)(out) + L-ascorbate(in) = monodehydro-L-ascorbate radical(in) + Fe(2+)(out) + H(+). The catalysed reaction is Cu(2+)(out) + L-ascorbate(in) = Cu(+)(out) + monodehydro-L-ascorbate radical(in) + H(+). The enzyme catalyses monodehydro-L-ascorbate radical(out) + L-ascorbate(in) = monodehydro-L-ascorbate radical(in) + L-ascorbate(out). Its function is as follows. Plasma membrane reductase that uses cytoplasmic ascorbate as an electron donor to reduce extracellular Fe(3+) into Fe(2+). It is also able to reduce extracellular monodehydro-L-ascorbate and may be involved in extracellular ascorbate regeneration. May also function as a cupric transmembrane reductase. This is Plasma membrane ascorbate-dependent reductase CYBRD1 (cybrd1) from Xenopus laevis (African clawed frog).